The primary structure comprises 158 residues: Ribosome maturation factor RimP (158 aa).

The protein belongs to the RimP family.

It localises to the cytoplasm. In terms of biological role, required for maturation of 30S ribosomal subunits. The polypeptide is Ribosome maturation factor RimP (Lactobacillus helveticus (strain DPC 4571)).